The primary structure comprises 162 residues: Large ribosomal subunit protein uL15 (162 aa).

Residues 1–18 are compositionally biased toward basic and acidic residues; that stretch reads MKLNEIRDNEGATKDRMR. A disordered region spans residues 1–42; the sequence is MKLNEIRDNEGATKDRMRVGRGIGSGKGKTAGRGVKGQKART. The span at 21–35 shows a compositional bias: gly residues; the sequence is RGIGSGKGKTAGRGV.

Belongs to the universal ribosomal protein uL15 family. Part of the 50S ribosomal subunit.

In terms of biological role, binds to the 23S rRNA. This chain is Large ribosomal subunit protein uL15, found in Methylobacterium sp. (strain 4-46).